The chain runs to 115 residues: ESX-1 secretion-associated protein EspL (115 aa).

This Mycobacterium tuberculosis (strain CDC 1551 / Oshkosh) protein is ESX-1 secretion-associated protein EspL.